Consider the following 74-residue polypeptide: Kappa-scoloptoxin(03)-Ssm1a (74 aa).

The N-terminal stretch at 1–23 (MNSSIAILLVMALIMFSLDKSYS) is a signal peptide. Intrachain disulfides connect Cys32–Cys59, Cys42–Cys58, and Cys45–Cys68.

It belongs to the scoloptoxin-03 family. As to expression, expressed by the venom gland.

The protein localises to the secreted. Functionally, this toxin inhibits voltage-gated potassium channel currents in DRG neurons (IC(50)=44.2 nM). In vivo, insects injected with this toxin showed signs of neurotoxicity including twitching, paralysis, and body contraction. This chain is Kappa-scoloptoxin(03)-Ssm1a, found in Scolopendra mutilans (Chinese red-headed centipede).